A 268-amino-acid chain; its full sequence is Ribosomal RNA small subunit methyltransferase A (268 aa).

Asparagine 21, leucine 23, glycine 48, glutamate 69, aspartate 94, and asparagine 115 together coordinate S-adenosyl-L-methionine.

This sequence belongs to the class I-like SAM-binding methyltransferase superfamily. rRNA adenine N(6)-methyltransferase family. RsmA subfamily.

It is found in the cytoplasm. It carries out the reaction adenosine(1518)/adenosine(1519) in 16S rRNA + 4 S-adenosyl-L-methionine = N(6)-dimethyladenosine(1518)/N(6)-dimethyladenosine(1519) in 16S rRNA + 4 S-adenosyl-L-homocysteine + 4 H(+). Its function is as follows. Specifically dimethylates two adjacent adenosines (A1518 and A1519) in the loop of a conserved hairpin near the 3'-end of 16S rRNA in the 30S particle. May play a critical role in biogenesis of 30S subunits. The chain is Ribosomal RNA small subunit methyltransferase A from Saccharophagus degradans (strain 2-40 / ATCC 43961 / DSM 17024).